The chain runs to 148 residues: Endoribonuclease YbeY (148 aa).

Residues H113, H117, and H123 each contribute to the Zn(2+) site.

It belongs to the endoribonuclease YbeY family. Zn(2+) serves as cofactor.

The protein localises to the cytoplasm. In terms of biological role, single strand-specific metallo-endoribonuclease involved in late-stage 70S ribosome quality control and in maturation of the 3' terminus of the 16S rRNA. In Borrelia hermsii (strain HS1 / DAH), this protein is Endoribonuclease YbeY.